We begin with the raw amino-acid sequence, 570 residues long: Sulfite reductase [NADPH] hemoprotein beta-component (570 aa).

4 residues coordinate [4Fe-4S] cluster: C434, C440, C479, and C483. A siroheme-binding site is contributed by C483.

The protein belongs to the nitrite and sulfite reductase 4Fe-4S domain family. In terms of assembly, alpha(8)-beta(8). The alpha component is a flavoprotein, the beta component is a hemoprotein. Requires siroheme as cofactor. [4Fe-4S] cluster is required as a cofactor.

It carries out the reaction hydrogen sulfide + 3 NADP(+) + 3 H2O = sulfite + 3 NADPH + 4 H(+). The protein operates within sulfur metabolism; hydrogen sulfide biosynthesis; hydrogen sulfide from sulfite (NADPH route): step 1/1. In terms of biological role, component of the sulfite reductase complex that catalyzes the 6-electron reduction of sulfite to sulfide. This is one of several activities required for the biosynthesis of L-cysteine from sulfate. The chain is Sulfite reductase [NADPH] hemoprotein beta-component from Enterobacter sp. (strain 638).